Consider the following 413-residue polypeptide: Gamma-glutamyl phosphate reductase (413 aa).

The protein belongs to the gamma-glutamyl phosphate reductase family.

The protein localises to the cytoplasm. It catalyses the reaction L-glutamate 5-semialdehyde + phosphate + NADP(+) = L-glutamyl 5-phosphate + NADPH + H(+). It functions in the pathway amino-acid biosynthesis; L-proline biosynthesis; L-glutamate 5-semialdehyde from L-glutamate: step 2/2. Its function is as follows. Catalyzes the NADPH-dependent reduction of L-glutamate 5-phosphate into L-glutamate 5-semialdehyde and phosphate. The product spontaneously undergoes cyclization to form 1-pyrroline-5-carboxylate. The protein is Gamma-glutamyl phosphate reductase of Thermus thermophilus (strain ATCC 27634 / DSM 579 / HB8).